A 402-amino-acid polypeptide reads, in one-letter code: Myb-related protein 1 (402 aa).

The region spanning 42 to 102 (TDAKPRLKWT…HLQKYRLSKN (61 aa)) is the HTH myb-type domain. Positions 73 to 98 (PKTIMKVMGIPGLTLYHLKSHLQKYR) form a DNA-binding region, H-T-H motif. The stretch at 148–168 (SDALQMQIEVQRRLHEQLEVQ) forms a coiled coil. Positions 161–166 (LHEQLE) match the LHEQLE motif. Over residues 238 to 260 (QQMQKTYPPNSSLDSCLTSSEGT) the composition is skewed to polar residues. 3 disordered regions span residues 238–266 (QQMQ…APKM), 344–363 (EHRG…FNEN), and 382–402 (HDEN…FSWN).

This sequence belongs to the MYB-CC family. As to quaternary structure, isoforms 1 and 2: homodimer. Isoform 3: loss of dimerization. As to expression, expressed in phloem and/or cambium.

It is found in the nucleus. In terms of biological role, transcription factor that may act on the GAL1 promoter. Acts redundantly with MYR2 as a repressor of flowering and organ elongation under decreased light intensity. Represses gibberellic acid (GA)-dependent responses and affects levels of bioactive GA. The chain is Myb-related protein 1 from Arabidopsis thaliana (Mouse-ear cress).